The following is a 727-amino-acid chain: Protein EXECUTER 1, chloroplastic (727 aa).

Disordered regions lie at residues 1 to 51, 65 to 102, 340 to 381, and 413 to 455; these read MAAA…SRLF, LAGA…AGSG, ISSS…LPSD, and DEDD…SGDE. Residues 1 to 83 constitute a chloroplast transit peptide; that stretch reads MAAAVSTAPR…PRRRVSSVVR (83 aa). Composition is skewed to low complexity over residues 19 to 33 and 42 to 51; these read SSSC…ASMS and PSSGSGSRLF. The span at 413–441 shows a compositional bias: acidic residues; sequence DEDDENDNPEDEIESSEDIGDGDNVEEAE.

The protein resides in the plastid. It is found in the chloroplast. Together with EX2, enables higher plants to perceive singlet oxygen as a stress signal in plastid that activates a genetically determined nuclear stress response program which triggers a programmed cell death (PCD). This transfer of singlet oxygen-induced stress-related signals from the plastid to the nucleus that triggers genetically controlled PCD pathway is unique to photosynthetic eukaryotes and operates under mild stress conditions, impeding photosystem II (PSII) without causing photooxidative damage of the plant. The chain is Protein EXECUTER 1, chloroplastic from Oryza sativa subsp. japonica (Rice).